A 278-amino-acid polypeptide reads, in one-letter code: Protein canopy homolog 3 (278 aa).

The first 30 residues, 1-30 (MDSMPEPASRCLLLLPLLLLLLLLLPAPEL), serve as a signal peptide directing secretion. Positions 47–271 (SKCEVCKYVA…EGIQKASPLT (225 aa)) constitute a Saposin B-type domain. 3 disulfides stabilise this stretch: Cys-49/Cys-206, Cys-52/Cys-194, and Cys-104/Cys-166. Residue Asn-153 is glycosylated (N-linked (GlcNAc...) asparagine). Positions 153–179 (NETSAEVADLKKQCDVLVEEFEEVIED) form a coiled coil. The interval 215-278 (KGDTAALGGK…PLTHSPPDEL (64 aa)) is disordered. The segment covering 233-243 (AKAAGGRSSSS) has biased composition (low complexity).

Belongs to the canopy family. In terms of assembly, interacts with HSP90B1; this interaction is disrupted in the presence of ATP. Interacts with TLR1, TLR2, TLR4 and TLR9. Strongest interaction with TLR4.

Its subcellular location is the endoplasmic reticulum. Toll-like receptor (TLR)-specific co-chaperone for HSP90B1. Required for proper TLR folding, except that of TLR3, and hence controls TLR exit from the endoplasmic reticulum. Consequently, required for both innate and adaptive immune responses. The protein is Protein canopy homolog 3 (CNPY3) of Homo sapiens (Human).